The following is a 210-amino-acid chain: Glutathione S-transferase P (210 aa).

Residues 2–81 enclose the GST N-terminal domain; sequence PPYTVVYFPV…HLGRTLGLYG (80 aa). Tyr-4 carries the phosphotyrosine; by EGFR modification. Glutathione is bound by residues Tyr-8, Arg-14, Trp-39, Lys-45, and 52–53; that span reads QL. A Phosphothreonine modification is found at Thr-62. 65–66 contributes to the glutathione binding site; it reads QS. The 122-residue stretch at 83-204 folds into the GST C-terminal domain; that stretch reads DQQEAALVDM…ASPEYVNLPI (122 aa). Lys-103 and Lys-116 each carry N6-succinyllysine. Lys-128 is modified (N6-acetyllysine). At Tyr-199 the chain carries Phosphotyrosine; by EGFR.

The protein belongs to the GST superfamily. Pi family. As to quaternary structure, homodimer. Interacts with CDK5.

It is found in the cytoplasm. It localises to the mitochondrion. The protein localises to the nucleus. The enzyme catalyses RX + glutathione = an S-substituted glutathione + a halide anion + H(+). It catalyses the reaction prostaglandin J2 + glutathione = prostaglandin J2-S-(R)-glutathione. It carries out the reaction prostaglandin J2 + glutathione = prostaglandin J2-S-(S)-glutathione. The catalysed reaction is prostaglandin A2 + glutathione = prostaglandin A2-S-(S)-glutathione. The enzyme catalyses 11(S)-hydroxy-14(S),15(S)-epoxy-(5Z,8Z,12E)-eicosatrienoate + glutathione = (11S,15S)-dihydroxy-14(R)-S-glutathionyl-(5Z,8Z,12E)-eicosatrienoate. Its function is as follows. Conjugation of reduced glutathione to a wide number of exogenous and endogenous hydrophobic electrophiles. Involved in the formation of glutathione conjugates of both prostaglandin A2 (PGA2) and prostaglandin J2 (PGJ2). Participates in the formation of novel hepoxilin regioisomers. Negatively regulates CDK5 activity via p25/p35 translocation to prevent neurodegeneration. The protein is Glutathione S-transferase P of Homo sapiens (Human).